The sequence spans 501 residues: NADH-quinone oxidoreductase subunit N (501 aa).

Transmembrane regions (helical) follow at residues 4–24 (HLPILIVIIPLFVAMAARLLV), 34–54 (FVLAAALAVLASGAVALAETL), 80–100 (LAGGLIVLVAFFGLAALVYAG), 112–132 (GSFYALFLLAKAGLLGMCATG), 134–154 (LFNLYVFLEISSLAAYALIAF), 167–187 (LIIGTAAACFYLLGVGYLYAM), 207–227 (PVVILALVFIVAGLGIKMALF), 241–261 (PAPVLAFMAAVMTKVSAYALY), 278–298 (LQVLGWMAAAGILFGSIMAIA), 314–334 (VGYIVLGLAVGNVLALYGALL), 335–355 (HVLSHALVKGGLFFIAGGVSW), 376–396 (MGAFVAAALSMIGLPPTLGFF), 409–429 (GAWVFVAVLVVSSLLTAVYFF), and 463–483 (PASMLVPILVLGIGVVVLGLF).

It belongs to the complex I subunit 2 family. In terms of assembly, NDH-1 is composed of 14 different subunits. Subunits NuoA, H, J, K, L, M, N constitute the membrane sector of the complex.

The protein localises to the cell membrane. It carries out the reaction a quinone + NADH + 5 H(+)(in) = a quinol + NAD(+) + 4 H(+)(out). Functionally, NDH-1 shuttles electrons from NADH, via FMN and iron-sulfur (Fe-S) centers, to quinones in the respiratory chain. The immediate electron acceptor for the enzyme in this species is believed to be a menaquinone. Couples the redox reaction to proton translocation (for every two electrons transferred, four hydrogen ions are translocated across the cytoplasmic membrane), and thus conserves the redox energy in a proton gradient. This Desulforudis audaxviator (strain MP104C) protein is NADH-quinone oxidoreductase subunit N.